The following is a 449-amino-acid chain: Tubulin alpha-1 chain (449 aa).

Q11, E71, S140, G144, T145, T179, N206, and N228 together coordinate GTP. Residue E71 participates in Mg(2+) binding. E254 is an active-site residue.

Belongs to the tubulin family. In terms of assembly, dimer of alpha and beta chains. A typical microtubule is a hollow water-filled tube with an outer diameter of 25 nm and an inner diameter of 15 nM. Alpha-beta heterodimers associate head-to-tail to form protofilaments running lengthwise along the microtubule wall with the beta-tubulin subunit facing the microtubule plus end conferring a structural polarity. Microtubules usually have 13 protofilaments but different protofilament numbers can be found in some organisms and specialized cells. Requires Mg(2+) as cofactor.

The protein localises to the cytoplasm. It localises to the cytoskeleton. The enzyme catalyses GTP + H2O = GDP + phosphate + H(+). Tubulin is the major constituent of microtubules, a cylinder consisting of laterally associated linear protofilaments composed of alpha- and beta-tubulin heterodimers. Microtubules grow by the addition of GTP-tubulin dimers to the microtubule end, where a stabilizing cap forms. Below the cap, tubulin dimers are in GDP-bound state, owing to GTPase activity of alpha-tubulin. This chain is Tubulin alpha-1 chain (tubA), found in Emericella nidulans (strain FGSC A4 / ATCC 38163 / CBS 112.46 / NRRL 194 / M139) (Aspergillus nidulans).